Here is a 481-residue protein sequence, read N- to C-terminus: Glutamyl-tRNA(Gln) amidotransferase subunit A (481 aa).

Active-site charge relay system residues include Lys-74 and Ser-149. The active-site Acyl-ester intermediate is the Ser-173.

Belongs to the amidase family. GatA subfamily. In terms of assembly, heterotrimer of A, B and C subunits.

It carries out the reaction L-glutamyl-tRNA(Gln) + L-glutamine + ATP + H2O = L-glutaminyl-tRNA(Gln) + L-glutamate + ADP + phosphate + H(+). Allows the formation of correctly charged Gln-tRNA(Gln) through the transamidation of misacylated Glu-tRNA(Gln) in organisms which lack glutaminyl-tRNA synthetase. The reaction takes place in the presence of glutamine and ATP through an activated gamma-phospho-Glu-tRNA(Gln). This chain is Glutamyl-tRNA(Gln) amidotransferase subunit A, found in Francisella tularensis subsp. holarctica (strain FTNF002-00 / FTA).